The chain runs to 121 residues: Large ribosomal subunit protein uL24 (121 aa).

A disordered region spans residues 1 to 30; sequence MVRIVSKQPRKQRKARYNAPNHTRGRFLSA.

Belongs to the universal ribosomal protein uL24 family. In terms of assembly, part of the 50S ribosomal subunit.

Functionally, one of two assembly initiator proteins, it binds directly to the 5'-end of the 23S rRNA, where it nucleates assembly of the 50S subunit. In terms of biological role, located at the polypeptide exit tunnel on the outside of the subunit. This is Large ribosomal subunit protein uL24 from Methanoculleus marisnigri (strain ATCC 35101 / DSM 1498 / JR1).